A 581-amino-acid chain; its full sequence is Proline--tRNA ligase (581 aa).

Belongs to the class-II aminoacyl-tRNA synthetase family. ProS type 1 subfamily. In terms of assembly, homodimer.

Its subcellular location is the cytoplasm. It catalyses the reaction tRNA(Pro) + L-proline + ATP = L-prolyl-tRNA(Pro) + AMP + diphosphate. In terms of biological role, catalyzes the attachment of proline to tRNA(Pro) in a two-step reaction: proline is first activated by ATP to form Pro-AMP and then transferred to the acceptor end of tRNA(Pro). As ProRS can inadvertently accommodate and process non-cognate amino acids such as alanine and cysteine, to avoid such errors it has two additional distinct editing activities against alanine. One activity is designated as 'pretransfer' editing and involves the tRNA(Pro)-independent hydrolysis of activated Ala-AMP. The other activity is designated 'posttransfer' editing and involves deacylation of mischarged Ala-tRNA(Pro). The misacylated Cys-tRNA(Pro) is not edited by ProRS. The polypeptide is Proline--tRNA ligase (Blochmanniella floridana).